A 1072-amino-acid chain; its full sequence is MPRSPYRSSNRSYRSPSPSRYDRSHPSSSSRRQDDRKASRYDDDYSRDRERDRERERDRTRDYRDRDRDYDRRRDKDRYRDDDRDRRRRDDKDDRRREERDRGSDRKRDSERRSPMSTIRVDPIVSLASPVPETEEEKKRKAKERLETWKRQRALKEGKSAAATPEPKSTAPPPVTSGLPPKPTAFSLSRIGLPLKPTNPTPLKRSMAALDDEDTSDRKLQKLDLPDFDPEVQSGDAAQVGSIGADLAVADGDEDDDTVVKKEEEKEEKMDIDKKAEEDEEEDPLDAFMRDNVQQVVEVNKADAKRMGLRVAEDGSDDENQGQVVEKDKLAEAEALLQQAAAKSRKKDLPPPDHSKIDYEPFRKAFYVPPVEVLEMDEEEAELVRLEMDGIKIRGQDAPKPVRNWGAFGLPQGCLDVIKHQGWETPTSIQAQAIPAIMSGRDVIGIAKTGSGKTVAFLLPMLRHVRDQRPVSGSEGPIAVVMSPTRELASQIYKECQPFLKVLNIRASCCVGGSSISEDIAAMKKGAEVVICTPGRMIDLLTANNGRVTNVRRTTYIVMDEADRMFDMGFEPQVMKIINNVRPSAQKVLFSATFPKTMESLARRILVKPLEITVGGRSVVAPEIDQRVEVRDGDTKFTRLLEILGEMGEEHKDEDDFRTLIFVDRQESADDLFRELLQRGYVCASLHGGKEQVDRDEAIKNFKNGDVPIIVATSVAARGLDVKELKLVINYDAPNHMEDYVHRAGRTGRAGNKGTCITFITPEQERFSVDIVRALEASKAFIPDDLKKMSDSFLGKIKSGKARAAGSGYSGKGLERIERRREEKDRAEKTTYGDTSEALSLSSREGAVIPYKAKTNEFKPPETSHKGEADYTFTEIKVDIVNGPAPDRVSSQPVFNPKNAVASLPAQTLAALEKAKKEGRGVDAANLANVVAKLTQSIELTKAEKLGLAAATSAPRLAPGARTKDPDATDWHAIFPINDYPQKARWKATNKEQMTLLQEVSGASITMRGRFYPPGEEPALGGEPKLSLLIESNDEMRVRAAVEEIRRVLVEGSVQALNAVDRAGASGGRYAV.

The span at 1–19 shows a compositional bias: low complexity; it reads MPRSPYRSSNRSYRSPSPS. 2 disordered regions span residues 1–219 and 245–293; these read MPRS…SDRK and ADLA…RDNV. Basic and acidic residues-rich tracts occupy residues 20-114 and 136-159; these read RYDR…ERRS and EEKKRKAKERLETWKRQRALKEGK. Positions 170 to 183 are enriched in pro residues; the sequence is TAPPPVTSGLPPKP. Over residues 193 to 204 the composition is skewed to low complexity; that stretch reads LPLKPTNPTPLK. Residues 258-277 are compositionally biased toward basic and acidic residues; that stretch reads TVVKKEEEKEEKMDIDKKAE. A Q motif motif is present at residues 403 to 431; sequence RNWGAFGLPQGCLDVIKHQGWETPTSIQA. The Helicase ATP-binding domain maps to 434–612; that stretch reads IPAIMSGRDV…RRILVKPLEI (179 aa). Residue 447-454 coordinates ATP; sequence AKTGSGKT. Residues 560-563 carry the DEAD box motif; that stretch reads DEAD. Positions 639-790 constitute a Helicase C-terminal domain; the sequence is RLLEILGEMG…FIPDDLKKMS (152 aa). The segment at 803–839 is disordered; sequence RAAGSGYSGKGLERIERRREEKDRAEKTTYGDTSEAL. The span at 813–831 shows a compositional bias: basic and acidic residues; the sequence is GLERIERRREEKDRAEKTT.

Belongs to the DEAD box helicase family. DDX46/PRP5 subfamily.

It is found in the nucleus. The enzyme catalyses ATP + H2O = ADP + phosphate + H(+). ATP-dependent RNA helicase involved spliceosome assembly and in nuclear splicing. Catalyzes an ATP-dependent conformational change of U2 snRNP. Bridges U1 and U2 snRNPs and enables stable U2 snRNP association with intron RNA. The sequence is that of Pre-mRNA-processing ATP-dependent RNA helicase PRP5 (PRP5) from Cryptococcus neoformans var. neoformans serotype D (strain B-3501A) (Filobasidiella neoformans).